We begin with the raw amino-acid sequence, 39 residues long: Photosystem II reaction center protein L (39 aa).

The chain crosses the membrane as a helical span at residues 18 to 38 (SLYLGLLLVAVLGILFSSYFF).

This sequence belongs to the PsbL family. PSII is composed of 1 copy each of membrane proteins PsbA, PsbB, PsbC, PsbD, PsbE, PsbF, PsbH, PsbI, PsbJ, PsbK, PsbL, PsbM, PsbT, PsbX, PsbY, PsbZ, Psb30/Ycf12, peripheral proteins PsbO, CyanoQ (PsbQ), PsbU, PsbV and a large number of cofactors. It forms dimeric complexes.

It localises to the cellular thylakoid membrane. One of the components of the core complex of photosystem II (PSII). PSII is a light-driven water:plastoquinone oxidoreductase that uses light energy to abstract electrons from H(2)O, generating O(2) and a proton gradient subsequently used for ATP formation. It consists of a core antenna complex that captures photons, and an electron transfer chain that converts photonic excitation into a charge separation. This subunit is found at the monomer-monomer interface and is required for correct PSII assembly and/or dimerization. This chain is Photosystem II reaction center protein L, found in Rippkaea orientalis (strain PCC 8801 / RF-1) (Cyanothece sp. (strain PCC 8801)).